The following is a 130-amino-acid chain: MAQVQYYGTGRRKSSVARVRLVPGDGKIVINNRDWEDYIPFAALREVIKQPLVATETLGNYDVLVNVHGGGYTGQAGAIRHGVARALLQVAPEYRPALKSAGLLTRDPRMKERKKYGLKGARRAPQFSKR.

The tract at residues 109–130 is disordered; sequence RMKERKKYGLKGARRAPQFSKR. Positions 111 to 130 are enriched in basic residues; it reads KERKKYGLKGARRAPQFSKR.

The protein belongs to the universal ribosomal protein uS9 family.

The sequence is that of Small ribosomal subunit protein uS9 from Listeria innocua serovar 6a (strain ATCC BAA-680 / CLIP 11262).